The sequence spans 20 residues: 23 kDa cell wall protein (20 aa).

It is found in the secreted. Its subcellular location is the cell wall. This Solanum lycopersicum (Tomato) protein is 23 kDa cell wall protein.